Consider the following 228-residue polypeptide: Endonuclease V (228 aa).

D43 and D109 together coordinate Mg(2+).

This sequence belongs to the endonuclease V family. The cofactor is Mg(2+).

It localises to the cytoplasm. It carries out the reaction Endonucleolytic cleavage at apurinic or apyrimidinic sites to products with a 5'-phosphate.. DNA repair enzyme involved in the repair of deaminated bases. Selectively cleaves double-stranded DNA at the second phosphodiester bond 3' to a deoxyinosine leaving behind the intact lesion on the nicked DNA. This is Endonuclease V from Dictyoglomus thermophilum (strain ATCC 35947 / DSM 3960 / H-6-12).